A 789-amino-acid polypeptide reads, in one-letter code: Polyribonucleotide nucleotidyltransferase (789 aa).

Residues D494 and D500 each coordinate Mg(2+). Residues P561–I620 form the KH domain. Residues G630–R697 form the S1 motif domain. Residues G709–F789 form a disordered region. The span at S737 to R749 shows a compositional bias: basic residues. Positions N763–N780 are enriched in low complexity.

The protein belongs to the polyribonucleotide nucleotidyltransferase family. It depends on Mg(2+) as a cofactor.

It is found in the cytoplasm. It catalyses the reaction RNA(n+1) + phosphate = RNA(n) + a ribonucleoside 5'-diphosphate. In terms of biological role, involved in mRNA degradation. Catalyzes the phosphorolysis of single-stranded polyribonucleotides processively in the 3'- to 5'-direction. The polypeptide is Polyribonucleotide nucleotidyltransferase (Ehrlichia ruminantium (strain Gardel)).